The sequence spans 240 residues: Anti-H(O) lectin (240 aa).

An N-linked (GlcNAc...) asparagine glycan is attached at Asn4. Mn(2+) is bound by residues Glu124 and Asp126. Residues Asp126, Tyr128, Asn130, and Asp133 each contribute to the Ca(2+) site. Mn(2+)-binding residues include Asp133 and His141.

It belongs to the leguminous lectin family.

Functionally, L-fucose specific lectin. The sequence is that of Anti-H(O) lectin from Lotus tetragonolobus (Winged pea).